The following is a 413-amino-acid chain: Protein trichome birefringence-like 9 (413 aa).

A helical; Signal-anchor for type II membrane protein transmembrane segment spans residues 22-42; sequence LFVSLFLLSLLIFSTVVVDVM. The short motif at 141–143 is the GDS motif element; that stretch reads GDS. The DCXHWCLPGXXDXWN motif motif lies at 384 to 398; it reads DCSHWCLPGVPDTWN.

The protein belongs to the PC-esterase family. TBL subfamily.

It localises to the membrane. In terms of biological role, may act as a bridging protein that binds pectin and other cell wall polysaccharides. Probably involved in maintaining esterification of pectins. May be involved in the specific O-acetylation of cell wall polymers. The polypeptide is Protein trichome birefringence-like 9 (TBL9) (Arabidopsis thaliana (Mouse-ear cress)).